The primary structure comprises 141 residues: MAKKVEKLVKLQIPAGKATPAPPVGPALGQAGINIMGFTKEFNARTADQAGMIIPVVISVYEDKSFTFITKTPPAAVLLKKAAGVEKGSGTPNKTKVATVTRAQVQKIAETKMPDLNAASLEAAMLMIEGTARSMGFTVTD.

Belongs to the universal ribosomal protein uL11 family. Part of the ribosomal stalk of the 50S ribosomal subunit. Interacts with L10 and the large rRNA to form the base of the stalk. L10 forms an elongated spine to which L12 dimers bind in a sequential fashion forming a multimeric L10(L12)X complex. Post-translationally, one or more lysine residues are methylated.

In terms of biological role, forms part of the ribosomal stalk which helps the ribosome interact with GTP-bound translation factors. The sequence is that of Large ribosomal subunit protein uL11 from Streptococcus suis (strain 05ZYH33).